Here is a 224-residue protein sequence, read N- to C-terminus: Urease accessory protein UreF (224 aa).

This sequence belongs to the UreF family. UreD, UreF and UreG form a complex that acts as a GTP-hydrolysis-dependent molecular chaperone, activating the urease apoprotein by helping to assemble the nickel containing metallocenter of UreC. The UreE protein probably delivers the nickel.

Its subcellular location is the cytoplasm. Functionally, required for maturation of urease via the functional incorporation of the urease nickel metallocenter. This Pseudomonas fluorescens (strain SBW25) protein is Urease accessory protein UreF.